Here is a 530-residue protein sequence, read N- to C-terminus: Chaperone Ric-8A (530 aa).

Position 435 is a phosphoserine (serine 435). Phosphothreonine occurs at positions 440 and 442. A phosphoserine mark is found at serine 501, serine 522, serine 523, and serine 527.

Belongs to the synembryn family. Interacts with GDP-bound G alpha proteins GNAI1, GNAO1 and GNAQ, and with GNA13 with lower affinity. Does not interact with G-alpha proteins when they are in complex with subunits beta and gamma. Interacts (via C-terminus) with RGS14; the interaction stimulates the dissociation of the complex between RGS14 and the active GTP-bound form of GNAI1. Interacts with NCS1; interaction is favored in the absence of Ca(2+) and myristoylation of NCS1 is not required. Phosphorylated at Ser-435 and Thr-440 by CK2, stabilizing its interface with G alpha proteins.

Its subcellular location is the cytoplasm. It localises to the cell cortex. In terms of biological role, chaperone that specifically binds and folds nascent G alpha proteins prior to G protein heterotrimer formation, promoting their stability and activity: folds GNAI1, GNAO1, GNA13 and GNAQ. Does not fold G(s) G-alpha proteins GNAS nor GNAL. Also acts as a guanine nucleotide exchange factor (GEF) for G alpha proteins by stimulating exchange of bound GDP for free GTP. Involved in regulation of microtubule pulling forces during mitotic movement of chromosomes by stimulating G(i)-alpha protein (GNAI1), possibly leading to release G(i)-alpha-GTP and NuMA proteins from the NuMA-GPSM2-G(i)-alpha-GDP complex. Also acts as an activator for G(q)-alpha (GNAQ) protein by enhancing the G(q)-coupled receptor-mediated ERK activation. This is Chaperone Ric-8A (RIC8A) from Macaca fascicularis (Crab-eating macaque).